The chain runs to 234 residues: Superoxide dismutase [Mn], mitochondrial (234 aa).

The N-terminal 34 residues, 1-34 (MFSIRSSSRVLLKASSATTRATLNAAASKTFTRS), are a transit peptide targeting the mitochondrion. Mn(2+) is bound by residues His60, His108, Asp198, and His202.

This sequence belongs to the iron/manganese superoxide dismutase family. In terms of assembly, homotetramer. It depends on Mn(2+) as a cofactor.

The protein resides in the mitochondrion matrix. It catalyses the reaction 2 superoxide + 2 H(+) = H2O2 + O2. Its function is as follows. Destroys superoxide anion radicals which are normally produced within the cells and which are toxic to biological systems. The chain is Superoxide dismutase [Mn], mitochondrial (SOD2) from Candida albicans (Yeast).